Here is a 167-residue protein sequence, read N- to C-terminus: uncharacterized protein (167 aa).

The a divalent metal cation site is built by His-48, His-127, and His-131.

Belongs to the DinB family.

This is an uncharacterized protein from Bacillus subtilis (strain 168).